The primary structure comprises 119 residues: Immunoglobulin heavy variable 3-73 (119 aa).

Positions 1–19 (MEFGLSWVFLVAILKGVQC) are cleaved as a signal peptide. The segment at 20–44 (EVQLVESGGGLVQPGGSLKLSCAAS) is framework-1. The Ig-like domain occupies 20-119 (EVQLVESGGG…EDTAVYYCTR (100 aa)). Residues Cys-41 and Cys-117 are joined by a disulfide bond. The interval 45–52 (GFTFSGSA) is complementarity-determining-1. Residues 53–69 (MHWVRQASGKGLEWVGR) are framework-2. Positions 70–79 (IRSKANSYAT) are complementarity-determining-2. The segment at 80–117 (AYAASVKGRFTISRDDSKNTAYLQMNSLKTEDTAVYYC) is framework-3. A complementarity-determining-3 region spans residues 118–119 (TR).

Immunoglobulins are composed of two identical heavy chains and two identical light chains; disulfide-linked.

It is found in the secreted. Its subcellular location is the cell membrane. In terms of biological role, v region of the variable domain of immunoglobulin heavy chains that participates in the antigen recognition. Immunoglobulins, also known as antibodies, are membrane-bound or secreted glycoproteins produced by B lymphocytes. In the recognition phase of humoral immunity, the membrane-bound immunoglobulins serve as receptors which, upon binding of a specific antigen, trigger the clonal expansion and differentiation of B lymphocytes into immunoglobulins-secreting plasma cells. Secreted immunoglobulins mediate the effector phase of humoral immunity, which results in the elimination of bound antigens. The antigen binding site is formed by the variable domain of one heavy chain, together with that of its associated light chain. Thus, each immunoglobulin has two antigen binding sites with remarkable affinity for a particular antigen. The variable domains are assembled by a process called V-(D)-J rearrangement and can then be subjected to somatic hypermutations which, after exposure to antigen and selection, allow affinity maturation for a particular antigen. The sequence is that of Immunoglobulin heavy variable 3-73 from Homo sapiens (Human).